Here is a 408-residue protein sequence, read N- to C-terminus: Serine/threonine transporter SstT (408 aa).

A run of 9 helical transmembrane segments spans residues 11 to 31 (LANG…VSLA), 43 to 63 (FLGS…VFIL), 82 to 102 (IVVL…LLSM), 141 to 161 (ALMT…GLAL), 192 to 212 (IGIF…AIAG), 216 to 236 (LLAV…PLIV), 290 to 310 (IPLG…VLTL), 316 to 336 (LGIQ…AISA), and 363 to 383 (VAMQ…AAET).

It belongs to the dicarboxylate/amino acid:cation symporter (DAACS) (TC 2.A.23) family.

It is found in the cell inner membrane. The catalysed reaction is L-serine(in) + Na(+)(in) = L-serine(out) + Na(+)(out). The enzyme catalyses L-threonine(in) + Na(+)(in) = L-threonine(out) + Na(+)(out). Its function is as follows. Involved in the import of serine and threonine into the cell, with the concomitant import of sodium (symport system). The chain is Serine/threonine transporter SstT from Shewanella sp. (strain MR-4).